A 577-amino-acid chain; its full sequence is Arginine--tRNA ligase (577 aa).

A 'HIGH' region motif is present at residues 122–132 (PNVAKEMHVGH).

The protein belongs to the class-I aminoacyl-tRNA synthetase family. In terms of assembly, monomer.

It localises to the cytoplasm. The enzyme catalyses tRNA(Arg) + L-arginine + ATP = L-arginyl-tRNA(Arg) + AMP + diphosphate. The protein is Arginine--tRNA ligase of Aliivibrio fischeri (strain MJ11) (Vibrio fischeri).